The chain runs to 212 residues: Leucyl/phenylalanyl-tRNA--protein transferase (212 aa).

This sequence belongs to the L/F-transferase family.

The protein resides in the cytoplasm. The catalysed reaction is N-terminal L-lysyl-[protein] + L-leucyl-tRNA(Leu) = N-terminal L-leucyl-L-lysyl-[protein] + tRNA(Leu) + H(+). It catalyses the reaction N-terminal L-arginyl-[protein] + L-leucyl-tRNA(Leu) = N-terminal L-leucyl-L-arginyl-[protein] + tRNA(Leu) + H(+). It carries out the reaction L-phenylalanyl-tRNA(Phe) + an N-terminal L-alpha-aminoacyl-[protein] = an N-terminal L-phenylalanyl-L-alpha-aminoacyl-[protein] + tRNA(Phe). Functions in the N-end rule pathway of protein degradation where it conjugates Leu, Phe and, less efficiently, Met from aminoacyl-tRNAs to the N-termini of proteins containing an N-terminal arginine or lysine. This Jannaschia sp. (strain CCS1) protein is Leucyl/phenylalanyl-tRNA--protein transferase.